The chain runs to 935 residues: Pre-mRNA-splicing factor CWC22 homolog (935 aa).

The interval Met1 to Gly179 is disordered. 2 stretches are compositionally biased toward basic and acidic residues: residues Val13 to Ser25 and Glu49 to Met70. Over residues Gln84–Val148 the composition is skewed to basic residues. A compositionally biased stretch (basic and acidic residues) spans Pro159–Arg175. The MIF4G domain occupies Lys212 to Lys400. Residues Ala463–Thr489 form a disordered region. Over residues Ile465–Glu483 the composition is skewed to acidic residues. The MI domain maps to Ala502–Met633. The tract at residues Lys725 to His935 is disordered. The segment covering Ser729–Asp763 has biased composition (low complexity). Basic and acidic residues-rich tracts occupy residues Lys780–Glu891 and Asp897–His935.

It belongs to the CWC22 family.

Its subcellular location is the nucleus. The protein resides in the nucleus speckle. In terms of biological role, required for early embryogenesis and tissue differentiation. Required for pre-mRNA splicing and for exon-junction complex (EJC) assembly. Hinders EIF4A3 from non-specifically binding RNA and escorts it to the splicing machinery to promote EJC assembly on mature mRNAs. Through its role in EJC assembly, required for nonsense-mediated mRNA decay. This chain is Pre-mRNA-splicing factor CWC22 homolog, found in Caenorhabditis briggsae.